The following is a 663-amino-acid chain: Innate immunity activator protein (663 aa).

The disordered stretch occupies residues 1-68 (MLQMPKLNEI…RLPTQPGPGW (68 aa)). Residues 40–50 (RAQGQAGGARA) are compositionally biased toward low complexity. Residues 118-147 (AVHKQQRALEARLEACLEELRRLCLREAEL) adopt a coiled-coil conformation. The short motif at 164 to 170 (PKVRRRI) is the Nuclear localization signal (NLS) 1 element. Disordered stretches follow at residues 242 to 362 (RRRN…ASSL), 378 to 425 (VPGQ…PRRR), and 444 to 493 (PLPH…RHRG). A compositionally biased stretch (low complexity) spans 259–272 (ELSASDDSSLSDGL). A compositionally biased stretch (pro residues) spans 282-298 (PKPPPESPAPPSRPLPP). Residues 327 to 340 (TSLDHPYEKPRKSS) show a composition bias toward basic and acidic residues. The short motif at 332–338 (PYEKPRK) is the Nuclear localization signal (NLS) 2 element. Residues 350-361 (ATTPQDGPSASS) show a composition bias toward polar residues. Positions 422 to 428 (PRRRPTH) match the Nuclear localization signal (NLS) 3 motif. The segment covering 455–475 (EDSGSDVSSISHPTSPGSSSP) has biased composition (low complexity).

In terms of assembly, interacts with IRAK1, NOD2 and RIPK2; the interaction takes place upon PRR stimulation. Interacts with YWHAQ/14-3-3T; the interaction increases upon PRR stimulation and is required for cellular signaling pathway activation and cytokine secretion. Interacts (via N-terminal domain) with CYTH1 and CYTH2 (via their N-terminal domains). Interacts with FBXW11 and BTRC; associates with SCF E3 ubiquitin-protein ligase complexes. Highly expressed in intestinal myeloid-derived cells and expressed in monocyte-derived macrophages upon induction by PRR activation.

It is found in the nucleus. The protein resides in the cytoplasm. In terms of biological role, expressed in peripheral macrophages and intestinal myeloid-derived cells, is required for optimal PRR (pattern recognition receptor)-induced signaling, cytokine secretion, and bacterial clearance. Upon stimulation of a broad range of PRRs (pattern recognition receptor) such as NOD2 or TLR2, TLR3, TLR4, TLR5, TLR7 and TLR9, associates with YWHAQ/14-3-3T, which in turn leads to the recruitment and activation of MAP kinases and NF-kappa-B signaling complexes that amplifies PRR-induced downstream signals and cytokine secretion. In the intestine, regulates adherens junction stability by regulating the degradation of CYTH1 and CYTH2, probably acting as substrate cofactor for SCF E3 ubiquitin-protein ligase complexes. Stabilizes adherens junctions by limiting CYTH1-dependent ARF6 activation. This chain is Innate immunity activator protein, found in Homo sapiens (Human).